Here is a 338-residue protein sequence, read N- to C-terminus: Ketol-acid reductoisomerase (NADP(+)) (338 aa).

Positions methionine 1–threonine 181 constitute a KARI N-terminal Rossmann domain. NADP(+) contacts are provided by residues tyrosine 24–glutamine 27, arginine 47, and serine 52. The active site involves histidine 107. Residue glycine 133 participates in NADP(+) binding. Residues asparagine 182–isoleucine 327 enclose the KARI C-terminal knotted domain. The Mg(2+) site is built by aspartate 190, glutamate 194, glutamate 226, and glutamate 230. Residue serine 251 coordinates substrate.

The protein belongs to the ketol-acid reductoisomerase family. It depends on Mg(2+) as a cofactor.

The enzyme catalyses (2R)-2,3-dihydroxy-3-methylbutanoate + NADP(+) = (2S)-2-acetolactate + NADPH + H(+). It carries out the reaction (2R,3R)-2,3-dihydroxy-3-methylpentanoate + NADP(+) = (S)-2-ethyl-2-hydroxy-3-oxobutanoate + NADPH + H(+). The protein operates within amino-acid biosynthesis; L-isoleucine biosynthesis; L-isoleucine from 2-oxobutanoate: step 2/4. It functions in the pathway amino-acid biosynthesis; L-valine biosynthesis; L-valine from pyruvate: step 2/4. Involved in the biosynthesis of branched-chain amino acids (BCAA). Catalyzes an alkyl-migration followed by a ketol-acid reduction of (S)-2-acetolactate (S2AL) to yield (R)-2,3-dihydroxy-isovalerate. In the isomerase reaction, S2AL is rearranged via a Mg-dependent methyl migration to produce 3-hydroxy-3-methyl-2-ketobutyrate (HMKB). In the reductase reaction, this 2-ketoacid undergoes a metal-dependent reduction by NADPH to yield (R)-2,3-dihydroxy-isovalerate. This Burkholderia multivorans (strain ATCC 17616 / 249) protein is Ketol-acid reductoisomerase (NADP(+)).